A 91-amino-acid polypeptide reads, in one-letter code: Small ribosomal subunit protein uS19 (91 aa).

Belongs to the universal ribosomal protein uS19 family.

Functionally, protein S19 forms a complex with S13 that binds strongly to the 16S ribosomal RNA. The chain is Small ribosomal subunit protein uS19 from Prochlorococcus marinus (strain SARG / CCMP1375 / SS120).